The primary structure comprises 707 residues: Elongation factor G (707 aa).

A tr-type G domain is found at 8–294 (ERYRNFGIIA…GVVDYLPSPL (287 aa)). Residues 17–24 (AHIDAGKT), 92–96 (DTPGH), and 146–149 (NKMD) contribute to the GTP site.

This sequence belongs to the TRAFAC class translation factor GTPase superfamily. Classic translation factor GTPase family. EF-G/EF-2 subfamily.

The protein resides in the cytoplasm. Catalyzes the GTP-dependent ribosomal translocation step during translation elongation. During this step, the ribosome changes from the pre-translocational (PRE) to the post-translocational (POST) state as the newly formed A-site-bound peptidyl-tRNA and P-site-bound deacylated tRNA move to the P and E sites, respectively. Catalyzes the coordinated movement of the two tRNA molecules, the mRNA and conformational changes in the ribosome. The polypeptide is Elongation factor G (Hyphomonas neptunium (strain ATCC 15444)).